Consider the following 942-residue polypeptide: UvrABC system protein A (942 aa).

32–39 (GLSGSGKS) contacts ATP. The C4-type zinc-finger motif lies at 251–278 (CPVCGFTVPELEPRLFSFNAPFGSCPTC). 2 ABC transporter domains span residues 308-589 (WNPI…KKSI) and 609-937 (GNGR…HYLK). 641–648 (GVSGSGKS) lines the ATP pocket. Residues 740 to 766 (CEACSGDGIIKIEMHFLPDVYVPCEVC) form a C4-type zinc finger.

It belongs to the ABC transporter superfamily. UvrA family. As to quaternary structure, forms a heterotetramer with UvrB during the search for lesions.

It is found in the cytoplasm. Its function is as follows. The UvrABC repair system catalyzes the recognition and processing of DNA lesions. UvrA is an ATPase and a DNA-binding protein. A damage recognition complex composed of 2 UvrA and 2 UvrB subunits scans DNA for abnormalities. When the presence of a lesion has been verified by UvrB, the UvrA molecules dissociate. This chain is UvrABC system protein A, found in Streptococcus pyogenes serotype M6 (strain ATCC BAA-946 / MGAS10394).